Reading from the N-terminus, the 676-residue chain is RNA helicase NPH-II (676 aa).

Residues 172–347 (FLAWISHRPV…IFLPNPAFIH (176 aa)) form the Helicase ATP-binding domain. 185-192 (GGTGVGKT) is an ATP binding site. Positions 296–299 (DEVH) match the DEXH box motif. A Helicase C-terminal domain is found at 366 to 535 (NPSSRMAYIE…NYILYANKFN (170 aa)).

It belongs to the DEAD box helicase family. DEAH subfamily. In terms of assembly, monomer.

The protein localises to the virion. It catalyses the reaction ATP + H2O = ADP + phosphate + H(+). NTP-dependent helicase that catalyzes unidirectional unwinding of 3'tailed duplex RNAs and plays an important role during transcription of early mRNAs, presumably by preventing R-loop formation behind the elongating RNA polymerase. Might also play a role in the export of newly synthesized mRNA chains out of the core into the cytoplasm. Required for replication and propagation of viral particles. The chain is RNA helicase NPH-II (OPG084) from Monkeypox virus.